We begin with the raw amino-acid sequence, 244 residues long: Na(+)-translocating NADH-quinone reductase subunit E (244 aa).

Helical transmembrane passes span 11 to 31, 50 to 70, 90 to 110, 123 to 143, 153 to 173, and 191 to 211; these read LLGI…TFLG, MSVA…HYFI, FLEL…LEVL, GIFL…LFGI, VVFS…FATI, and ISFI…GIDI. Residues 222–236 are compositionally biased toward polar residues; sequence VTNIATDSPQPNTHS. The segment at 222 to 244 is disordered; sequence VTNIATDSPQPNTHSSSEEPKAS.

It belongs to the NqrDE/RnfAE family. As to quaternary structure, composed of six subunits; NqrA, NqrB, NqrC, NqrD, NqrE and NqrF.

It is found in the cell inner membrane. It carries out the reaction a ubiquinone + n Na(+)(in) + NADH + H(+) = a ubiquinol + n Na(+)(out) + NAD(+). In terms of biological role, NQR complex catalyzes the reduction of ubiquinone-1 to ubiquinol by two successive reactions, coupled with the transport of Na(+) ions from the cytoplasm to the periplasm. NqrA to NqrE are probably involved in the second step, the conversion of ubisemiquinone to ubiquinol. The polypeptide is Na(+)-translocating NADH-quinone reductase subunit E (Chlamydia trachomatis serovar A (strain ATCC VR-571B / DSM 19440 / HAR-13)).